The primary structure comprises 207 residues: MIVSIAGKLVQVGEISVIIQAAPFDYEVYVGDYTRRQLQNQIGNEVRLHTLDYIEGNAQGGRLTPRLIGFSTLPERQFFDLFCSVDGVGVKKALRAMVRPVKELAVLIEEQDAKTLSALPGIGPATSEKVIAKLRRKMPRFALMVAGGEVADAMEVESPIVSDTYDALVTLGHSESDARKLIDETLATGKKFKDTESLLTAIYQRSK.

The interval 1 to 71 (MIVSIAGKLV…RLTPRLIGFS (71 aa)) is domain I. The tract at residues 72–149 (TLPERQFFDL…RFALMVAGGE (78 aa)) is domain II. The flexible linker stretch occupies residues 150–155 (VADAME). Residues 156-207 (VESPIVSDTYDALVTLGHSESDARKLIDETLATGKKFKDTESLLTAIYQRSK) are domain III.

The protein belongs to the RuvA family. In terms of assembly, homotetramer. Forms an RuvA(8)-RuvB(12)-Holliday junction (HJ) complex. HJ DNA is sandwiched between 2 RuvA tetramers; dsDNA enters through RuvA and exits via RuvB. An RuvB hexamer assembles on each DNA strand where it exits the tetramer. Each RuvB hexamer is contacted by two RuvA subunits (via domain III) on 2 adjacent RuvB subunits; this complex drives branch migration. In the full resolvosome a probable DNA-RuvA(4)-RuvB(12)-RuvC(2) complex forms which resolves the HJ.

It is found in the cytoplasm. In terms of biological role, the RuvA-RuvB-RuvC complex processes Holliday junction (HJ) DNA during genetic recombination and DNA repair, while the RuvA-RuvB complex plays an important role in the rescue of blocked DNA replication forks via replication fork reversal (RFR). RuvA specifically binds to HJ cruciform DNA, conferring on it an open structure. The RuvB hexamer acts as an ATP-dependent pump, pulling dsDNA into and through the RuvAB complex. HJ branch migration allows RuvC to scan DNA until it finds its consensus sequence, where it cleaves and resolves the cruciform DNA. The polypeptide is Holliday junction branch migration complex subunit RuvA (Rhodopirellula baltica (strain DSM 10527 / NCIMB 13988 / SH1)).